The primary structure comprises 807 residues: Dual specificity protein phosphatase PPS1 (807 aa).

In terms of domain architecture, Tyrosine-protein phosphatase spans 585 to 783; that stretch reads LPSRILRHLY…LFKWWKKHYN (199 aa). The catalytic stretch occupies residues 593-807; that stretch reads LYLGSLDHAQ…GIAEVNMKYT (215 aa). C725 functions as the Phosphocysteine intermediate in the catalytic mechanism.

The protein belongs to the protein-tyrosine phosphatase family. Non-receptor class dual specificity subfamily.

The enzyme catalyses O-phospho-L-tyrosyl-[protein] + H2O = L-tyrosyl-[protein] + phosphate. It catalyses the reaction O-phospho-L-seryl-[protein] + H2O = L-seryl-[protein] + phosphate. It carries out the reaction O-phospho-L-threonyl-[protein] + H2O = L-threonyl-[protein] + phosphate. Functionally, protein phosphatase with specificity for serine, threonine, and tyrosine residues; has a role in the DNA synthesis phase of the cell cycle. The sequence is that of Dual specificity protein phosphatase PPS1 (PPS1) from Saccharomyces cerevisiae (strain ATCC 204508 / S288c) (Baker's yeast).